Consider the following 92-residue polypeptide: ATP synthase subunit c (92 aa).

2 consecutive transmembrane segments (helical) span residues 20 to 40 (GAGLVAVGAGLASIGNFGTGL) and 71 to 91 (MAISESASLYSFIIAILLVFV).

It belongs to the ATPase C chain family. In terms of assembly, F-type ATPases have 2 components, F(1) - the catalytic core - and F(0) - the membrane proton channel. F(1) has five subunits: alpha(3), beta(3), gamma(1), delta(1), epsilon(1). F(0) has three main subunits: a(1), b(2) and c(10-14). The alpha and beta chains form an alternating ring which encloses part of the gamma chain. F(1) is attached to F(0) by a central stalk formed by the gamma and epsilon chains, while a peripheral stalk is formed by the delta and b chains.

Its subcellular location is the cell membrane. Its function is as follows. F(1)F(0) ATP synthase produces ATP from ADP in the presence of a proton or sodium gradient. F-type ATPases consist of two structural domains, F(1) containing the extramembraneous catalytic core and F(0) containing the membrane proton channel, linked together by a central stalk and a peripheral stalk. During catalysis, ATP synthesis in the catalytic domain of F(1) is coupled via a rotary mechanism of the central stalk subunits to proton translocation. Key component of the F(0) channel; it plays a direct role in translocation across the membrane. A homomeric c-ring of between 10-14 subunits forms the central stalk rotor element with the F(1) delta and epsilon subunits. This Mycoplasmopsis pulmonis (strain UAB CTIP) (Mycoplasma pulmonis) protein is ATP synthase subunit c.